Here is a 310-residue protein sequence, read N- to C-terminus: Protein U84 (310 aa).

The protein belongs to the herpesviridae U84 family.

The sequence is that of Protein U84 (U84) from Human herpesvirus 7 (strain JI) (HHV-7).